Here is a 443-residue protein sequence, read N- to C-terminus: Putative cytochrome bd menaquinol oxidase subunit I (443 aa).

A run of 9 helical transmembrane segments spans residues 19 to 39 (IIFATLGVGLPLMILVAELIY), 60 to 80 (VLLGVAIPTGTIAGTQLALLW), 93 to 113 (LPFQIEIYAFFVEALFMSIYV), 125 to 145 (IVAVFFVLVGAAASAVLITNV), 176 to 196 (FFITAGHVVLSAFMTGAFIVA), 219 to 239 (ALLLALTIGGIFSLLTALNGH), 322 to 342 (LFNAMVGVGMLLILYSIIGVV), 357 to 377 (LIIFMTAGPFSLIGIEFGWIF), and 405 to 425 (VLFLFFTFVYAVLGAAVVYVL). His182 is a binding site for heme b.

It belongs to the cytochrome ubiquinol oxidase subunit 1 family. Requires heme b as cofactor.

The protein resides in the cell membrane. May have a role in sporulation. Can compensate for the loss of cytochrome aa3. The protein is Putative cytochrome bd menaquinol oxidase subunit I (ythA) of Bacillus subtilis (strain 168).